We begin with the raw amino-acid sequence, 405 residues long: MANIVVKRLERTPIDETPVEIVERKGIGHPDSICDGVAESVSVALCKMYKEKMGVVLHHNTDQVELVGGYAYPELGGGCMVSPIYILLSGRATMEVLDKESGKIIKLPVNTTAVNAARDYLKKALRNMDLEKDVVVDCRIGQGSVDLVEVFDRKRSEIPHANDTSFGVGHAPLSTTEKIVLETEKLLNSDALKAEIPAVGEDIKVMGLREGKKITLTIAMAAVDKYVNSCADYVKVKELAKAKVEENAKKYLDGHELEVCINTADDDEDCIFLTVTGTSAEMGDDGSVGRGNRANGLITPFRPMSMEATSGKNPINHIGKIYNILSNIIAEDVAKIEGVRECQIRILSQIGKPITEPKILDIEMIPENGFELEDLSPKAKEIAQKWLDNITEVTERIVSGNVTTF.

Glycine 141–aspartate 146 contacts ATP.

Belongs to the AdoMet synthase 2 family. It depends on Mg(2+) as a cofactor.

It catalyses the reaction L-methionine + ATP + H2O = S-adenosyl-L-methionine + phosphate + diphosphate. It participates in amino-acid biosynthesis; S-adenosyl-L-methionine biosynthesis; S-adenosyl-L-methionine from L-methionine: step 1/1. Catalyzes the formation of S-adenosylmethionine from methionine and ATP. This chain is S-adenosylmethionine synthase, found in Methanococcus maripaludis (strain C7 / ATCC BAA-1331).